A 291-amino-acid polypeptide reads, in one-letter code: MSNERDTSRTPTPDHAEHNAFFPSPYSLSQYTSAKTDFDGADYPTPYNGGKKVLMIGTDERYILMQNGSMFSTGNHPVEMLLPMYHLDKAGFEFDVATLSGNPVKLEMWAMPGEDEAVKSIYAKYLPKLKAPQKLADLLEQAVADDSPYAAVFVPGGHGVLAGIPHSREVKRLLNAFLAKDRYIITLCHGPACLLAPAVEEKPEDYPFKGYEICVFPDALDTGANLEIGYMPGPLPWLVGENLQKLGVKILNKGITGQVHRDRKLLTGDSPLASNNLGKLAAKTLLEAFAR.

Over residues 1–18 the composition is skewed to basic and acidic residues; it reads MSNERDTSRTPTPDHAEH. The disordered stretch occupies residues 1 to 24; the sequence is MSNERDTSRTPTPDHAEHNAFFPS. Cys-188 serves as the catalytic Nucleophile.

It belongs to the peptidase C56 family. HchA subfamily.

It is found in the cytoplasm. The enzyme catalyses N(omega)-(1-hydroxy-2-oxopropyl)-L-arginyl-[protein] + H2O = lactate + L-arginyl-[protein] + H(+). It carries out the reaction N(6)-(1-hydroxy-2-oxopropyl)-L-lysyl-[protein] + H2O = lactate + L-lysyl-[protein] + H(+). It catalyses the reaction S-(1-hydroxy-2-oxopropyl)-L-cysteinyl-[protein] + H2O = lactate + L-cysteinyl-[protein] + H(+). The catalysed reaction is N(omega)-(1-hydroxy-2-oxoethyl)-L-arginyl-[protein] + H2O = L-arginyl-[protein] + glycolate + H(+). The enzyme catalyses N(6)-(1-hydroxy-2-oxoethyl)-L-lysyl-[protein] + H2O = glycolate + L-lysyl-[protein] + H(+). It carries out the reaction S-(1-hydroxy-2-oxoethyl)-L-cysteinyl-[protein] + H2O = glycolate + L-cysteinyl-[protein] + H(+). It catalyses the reaction N(2)-(1-hydroxy-2-oxopropyl)-dGTP + H2O = lactate + dGTP + H(+). The catalysed reaction is N(2)-(1-hydroxy-2-oxopropyl)-GTP + H2O = lactate + GTP + H(+). The enzyme catalyses N(2)-(1-hydroxy-2-oxopropyl)-GDP + H2O = lactate + GDP + H(+). It carries out the reaction N(2)-(1-hydroxy-2-oxopropyl)-GMP + H2O = lactate + GMP + H(+). It catalyses the reaction N(2)-(1-hydroxy-2-oxoethyl)-dGTP + H2O = dGTP + glycolate + H(+). The catalysed reaction is N(2)-(1-hydroxy-2-oxoethyl)-GTP + H2O = glycolate + GTP + H(+). The enzyme catalyses N(2)-(1-hydroxy-2-oxoethyl)-GDP + H2O = glycolate + GDP + H(+). It carries out the reaction N(2)-(1-hydroxy-2-oxoethyl)-GMP + H2O = glycolate + GMP + H(+). It catalyses the reaction an N(2)-(1-hydroxy-2-oxopropyl)-guanosine in RNA + H2O = a guanosine in RNA + lactate + H(+). The catalysed reaction is an N(2)-(1-hydroxy-2-oxopropyl)-2'-deoxyguanosine in DNA + H2O = a 2'-deoxyguanosine in DNA + lactate + H(+). The enzyme catalyses an N(2)-(1-hydroxy-2-oxoethyl)-guanosine in RNA + H2O = a guanosine in RNA + glycolate + H(+). It carries out the reaction an N(2)-(1-hydroxy-2-oxoethyl)-2'-deoxyguanosine in DNA + H2O = a 2'-deoxyguanosine in DNA + glycolate + H(+). Functionally, protein and nucleotide deglycase that catalyzes the deglycation of the Maillard adducts formed between amino groups of proteins or nucleotides and reactive carbonyl groups of glyoxals. Thus, functions as a protein deglycase that repairs methylglyoxal- and glyoxal-glycated proteins, and releases repaired proteins and lactate or glycolate, respectively. Deglycates cysteine, arginine and lysine residues in proteins, and thus reactivates these proteins by reversing glycation by glyoxals. Acts on early glycation intermediates (hemithioacetals and aminocarbinols), preventing the formation of Schiff bases and advanced glycation endproducts (AGE). Also functions as a nucleotide deglycase able to repair glycated guanine in the free nucleotide pool (GTP, GDP, GMP, dGTP) and in DNA and RNA. Is thus involved in a major nucleotide repair system named guanine glycation repair (GG repair), dedicated to reversing methylglyoxal and glyoxal damage via nucleotide sanitization and direct nucleic acid repair. Plays an important role in protecting cells from carbonyl stress. The polypeptide is Protein/nucleic acid deglycase HchA (Pseudomonas aeruginosa (strain UCBPP-PA14)).